The following is a 142-amino-acid chain: Small ribosomal subunit protein uS12 (142 aa).

The tract at residues 1 to 30 (MGKTRGMGAARKLKNHRRRQRWADKSYKKS) is disordered. Residues 11–20 (RKLKNHRRRQ) show a composition bias toward basic residues. Basic and acidic residues predominate over residues 21–30 (RWADKSYKKS). Proline 61 is modified (hydroxyproline).

It belongs to the universal ribosomal protein uS12 family.

The polypeptide is Small ribosomal subunit protein uS12 (RPS23) (Fragaria ananassa (Strawberry)).